A 927-amino-acid polypeptide reads, in one-letter code: DNA mismatch repair protein MutS (927 aa).

Residue G646 to S653 coordinates ATP. A disordered region spans residues S904–G927. Residues S915–G927 show a composition bias toward basic and acidic residues.

This sequence belongs to the DNA mismatch repair MutS family.

This protein is involved in the repair of mismatches in DNA. It is possible that it carries out the mismatch recognition step. This protein has a weak ATPase activity. The protein is DNA mismatch repair protein MutS of Desulfovibrio desulfuricans (strain ATCC 27774 / DSM 6949 / MB).